Here is a 157-residue protein sequence, read N- to C-terminus: Protein-export protein SecB (157 aa).

The protein belongs to the SecB family. In terms of assembly, homotetramer, a dimer of dimers. One homotetramer interacts with 1 SecA dimer.

It localises to the cytoplasm. One of the proteins required for the normal export of preproteins out of the cell cytoplasm. It is a molecular chaperone that binds to a subset of precursor proteins, maintaining them in a translocation-competent state. It also specifically binds to its receptor SecA. In Rhodopseudomonas palustris (strain TIE-1), this protein is Protein-export protein SecB.